The chain runs to 213 residues: UPF0329 protein ECU04_0110 (213 aa).

It belongs to the UPF0329 family.

In Encephalitozoon cuniculi (strain GB-M1) (Microsporidian parasite), this protein is UPF0329 protein ECU04_0110.